Reading from the N-terminus, the 820-residue chain is Trimethylamine-N-oxide reductase (820 aa).

The tat-type signal signal peptide spans 1 to 33; sequence MAITRRSFLKGVATTSAASIIGPSLLTSVSAQA. Residue Ser-179 participates in Mo-bis(molybdopterin guanine dinucleotide) binding.

The protein belongs to the prokaryotic molybdopterin-containing oxidoreductase family. It depends on Mo-bis(molybdopterin guanine dinucleotide) as a cofactor. Post-translationally, predicted to be exported by the Tat system. The position of the signal peptide cleavage has not been experimentally proven.

It is found in the periplasm. It catalyses the reaction trimethylamine + 2 Fe(III)-[cytochrome c] + H2O = trimethylamine N-oxide + 2 Fe(II)-[cytochrome c] + 3 H(+). In terms of biological role, reduces trimethylamine-N-oxide (TMAO) into trimethylamine; an anaerobic reaction coupled to energy-yielding reactions. This Vibrio cholerae serotype O1 (strain ATCC 39315 / El Tor Inaba N16961) protein is Trimethylamine-N-oxide reductase (torA).